Here is a 176-residue protein sequence, read N- to C-terminus: Inner membrane assembly complex subunit 17 (176 aa).

A mitochondrion-targeting transit peptide spans 1–28 (MLRVLPTSFKSISTRSAFRACQLSPLTV). Topologically, residues 29-98 (YCPLKSSQGT…MSQEVSLKRF (70 aa)) are mitochondrial matrix. A helical membrane pass occupies residues 99-121 (VRPLWVFFLMSSTVYLILHYVWW). Over 122–176 (KLEVVEKEKELQSHVESLEMELDQTLKSQNQNVSSSQNNGNNKTNDKPWYRKWFF) the chain is Mitochondrial intermembrane. Positions 123 to 151 (LEVVEKEKELQSHVESLEMELDQTLKSQN) form a coiled coil. Residues 149 to 163 (SQNQNVSSSQNNGNN) are compositionally biased toward low complexity. A disordered region spans residues 149–168 (SQNQNVSSSQNNGNNKTNDK).

This sequence belongs to the INA17 family. In terms of assembly, component of the inner membrane assembly (INA) complex, composed of INA17 and INA22. Interacts with a subset of F(1)F(0)-ATP synthase subunits of the F(1)-domain and the peripheral stalk.

It is found in the mitochondrion inner membrane. Its function is as follows. Component of the INA complex (INAC) that promotes the biogenesis of mitochondrial F(1)F(0)-ATP synthase. INAC facilitates the assembly of the peripheral stalk and promotes the assembly of the catalytic F(1)-domain with the membrane-embedded F(0)-domain. This Zygosaccharomyces rouxii (strain ATCC 2623 / CBS 732 / NBRC 1130 / NCYC 568 / NRRL Y-229) protein is Inner membrane assembly complex subunit 17.